The primary structure comprises 860 residues: MENQKENLFSEPHKRGLMKSPLHPSSKANMVLAEIQPDLGPLTTPTKPKEVSQGEPWTPTANLKMLISAVSPEIRSRDQKRGLSDNRSALPEARDCLHEHLSGDEFEKSQPSRKEKSLGLLCHKFLARYPKYPNPAVNNDICLDEVAEELNVERRRIYDIVNVLESLHMVSRLAKNRYTWHGRHNLTKTLGTLKSVGEENKYAEQIMMIKRKEYEQEFDFIKSCGIEDHVIKSHTGQNGHSDMCFVELPGVEFRAASVNSRKDKSLRVMSQKFVMLFLVSTPQIVSLEIAAKILIGEDHVEDLDKSKYKTKIRRLYDIANVLSSLDLIKKVHVTEERGRKPAFKWTGPEISPNNSGSSPIMPLPASLEAEQSAKENCAKNLFSTRGKPSFTRHPSLIKLVKSIENDRRKISSAPSSPVKSNKAESSQNSPPVPNKMAQLAAICKMQLEEQSSEPRKKVKVNLARSGHYKPLAPLDPTVNTELELLTPSLIQPLGVVPLIPSPLSSAVPVILPQAPSGPSYAIYLQPAQAQMLTPPPGLSPTVCPTQPSNATGSKDPTDAPAEKTATDAATTGSLQPAPERHGAKHRSKETTGDRGTKRMITAEDSGPSSVKKPKEDLKALENVPTPTPLFPSGYLIPLTQCSSLGPDSVLSNTENSGTPSPNHRIYGSPIAGVIPVASSELTAVNFPPFHVTPLKLMVSPTSMAAVPVGNSPALNSGHPAPAQNPSSAIVNFTLQHLGLISPGVQMSASPGPGAGTVPVSPRVEADNLSSRQRRATNHDSPVLGQSQLNGQPVAGTGAQQPVPVTPKGSQLVAENFFRTPGGPTKPTSSPYTDFDGANKTSFGTLFVPQRKLEVSTEDIH.

2 disordered regions span residues 1–27 (MENQKENLFSEPHKRGLMKSPLHPSSK) and 38–57 (DLGPLTTPTKPKEVSQGEPW). Residues Ser71 and Ser102 each carry the phosphoserine modification. 2 consecutive DNA-binding regions follow at residues 113-182 (RKEK…TWHG) and 261-347 (RKDK…KWTG). 3 disordered regions span residues 407 to 433 (RRKISSAPSSPVKSNKAESSQNSPPVP), 532 to 616 (LTPP…PKED), and 745 to 803 (QMSA…QPVP). Ser412 and Ser416 each carry phosphoserine. Composition is skewed to polar residues over residues 412-429 (SAPSSPVKSNKAESSQNS) and 542-554 (VCPTQPSNATGSK). The span at 555–565 (DPTDAPAEKTA) shows a compositional bias: basic and acidic residues.

Belongs to the E2F/DP family. In terms of assembly, interacts with HIF1A. Homodimer and heterodimer: mainly forms homodimers and, to a lesser extent, heterodimers with E2F8. Dimerization is important for DNA-binding. As to expression, highly expressed in liver, skin, thymus and testis. Expressed in trophoblast giant cells throughout placenta development (at protein level).

The protein resides in the nucleus. Atypical E2F transcription factor that participates in various processes such as angiogenesis and polyploidization of specialized cells. Mainly acts as a transcription repressor that binds DNA independently of DP proteins and specifically recognizes the E2 recognition site 5'-TTTC[CG]CGC-3'. Directly represses transcription of classical E2F transcription factors such as E2F1: component of a feedback loop in S phase by repressing the expression of E2F1, thereby preventing p53/TP53-dependent apoptosis. Plays a key role in polyploidization of cells in placenta and liver by regulating the endocycle, probably by repressing genes promoting cytokinesis and antagonizing action of classical E2F proteins (E2F1, E2F2 and/or E2F3). Required for placental development by promoting polyploidization of trophoblast giant cells. Acts as a promoter of sprouting angiogenesis, possibly by acting as a transcription activator: associates with HIF1A, recognizes and binds the VEGFA promoter, which is different from canonical E2 recognition site, and activates expression of the VEGFA gene. The polypeptide is Transcription factor E2F8 (E2f8) (Mus musculus (Mouse)).